The following is an 827-amino-acid chain: Periplasmic nitrate reductase (827 aa).

The segment at residues M1 to A34 is a signal peptide (tat-type signal). Residues I36–D92 enclose the 4Fe-4S Mo/W bis-MGD-type domain. C43, C46, C50, and C78 together coordinate [4Fe-4S] cluster. Mo-bis(molybdopterin guanine dinucleotide) contacts are provided by residues K80, Q148, N173, C177, W210 to M217, S241 to H245, Q260 to D262, M371, Q375, N481, S507 to D508, K530, D557, and T717 to S726. F793 contributes to the substrate binding site. 2 residues coordinate Mo-bis(molybdopterin guanine dinucleotide): N801 and K818.

This sequence belongs to the prokaryotic molybdopterin-containing oxidoreductase family. NasA/NapA/NarB subfamily. In terms of assembly, component of the periplasmic nitrate reductase NapAB complex composed of NapA and NapB. The cofactor is [4Fe-4S] cluster. Mo-bis(molybdopterin guanine dinucleotide) is required as a cofactor. Post-translationally, predicted to be exported by the Tat system. The position of the signal peptide cleavage has not been experimentally proven.

Its subcellular location is the periplasm. It catalyses the reaction 2 Fe(II)-[cytochrome] + nitrate + 2 H(+) = 2 Fe(III)-[cytochrome] + nitrite + H2O. Functionally, catalytic subunit of the periplasmic nitrate reductase complex NapAB. Receives electrons from NapB and catalyzes the reduction of nitrate to nitrite. This is Periplasmic nitrate reductase from Paramagnetospirillum magnetotacticum (Aquaspirillum magnetotacticum).